An 86-amino-acid polypeptide reads, in one-letter code: Putative sodium channel toxin Ts17 (86 aa).

The first 19 residues, 1–19, serve as a signal peptide directing secretion; sequence MNYFIFLVVACLLTAGTEG. The LCN-type CS-alpha/beta domain occupies 21-82; sequence KDGYPVEGDN…EPTKTSGRCK (62 aa). Cystine bridges form between Cys-31-Cys-81, Cys-35-Cys-57, Cys-43-Cys-64, and Cys-47-Cys-66. A Proline amide modification is found at Pro-83.

This sequence belongs to the long (4 C-C) scorpion toxin superfamily. Sodium channel inhibitor family. Alpha subfamily. In terms of tissue distribution, expressed by the venom gland.

Its subcellular location is the secreted. In terms of biological role, alpha toxins bind voltage-independently at site-3 of sodium channels (Nav) and inhibit the inactivation of the activated channels, thereby blocking neuronal transmission. The protein is Putative sodium channel toxin Ts17 of Tityus serrulatus (Brazilian scorpion).